The primary structure comprises 954 residues: Glycine dehydrogenase (decarboxylating) (954 aa).

Lys706 is subject to N6-(pyridoxal phosphate)lysine.

It belongs to the GcvP family. As to quaternary structure, the glycine cleavage system is composed of four proteins: P, T, L and H. Pyridoxal 5'-phosphate serves as cofactor.

The catalysed reaction is N(6)-[(R)-lipoyl]-L-lysyl-[glycine-cleavage complex H protein] + glycine + H(+) = N(6)-[(R)-S(8)-aminomethyldihydrolipoyl]-L-lysyl-[glycine-cleavage complex H protein] + CO2. Functionally, the glycine cleavage system catalyzes the degradation of glycine. The P protein binds the alpha-amino group of glycine through its pyridoxal phosphate cofactor; CO(2) is released and the remaining methylamine moiety is then transferred to the lipoamide cofactor of the H protein. This Pseudomonas syringae pv. syringae (strain B728a) protein is Glycine dehydrogenase (decarboxylating).